The sequence spans 1008 residues: MEDLQPINPNTDSPTETGATTIEARFSDFCKGRLTMDDNALEEAMKLFNQSKHLFMTNASALGSGTPEEAEHYWFAFILFSMKRLSKKNDGEDAAKSSENSFKLYQILRVAKLNFVDFFKELPQFIVKTGPILSNLYGSDWETRLQAKELQANFVHLSLLSKFYKRAFKTLFKATHENVEGQSAVANSADYISNCHRFGWMLFLALRVHAFSRFKDLVTCTNGLVSILAILIIHIPARFRNFSMSDSSRFVKKDDKVVDLLASLCNMYETSEDELRKTVVRTNIVVEEILKKDPSMASECTNGNLDNIDTDDLTYFQDLLEEQSLSSDLDVLEKDYDDAMLLEGELDERLFINDEESLLGSSSLSGGAINMTGTKRKVDSMTSPTKTITSPLSPYKSPSKMISTPVSTAMTTAKWLRTVVSPLSSFPSVDLTRFLQSCDKDVTSDVIKRARIILEAIFPSSGIPDRTIISNTQTTNLMDNIWAEQRRLEALKLYYRVLHAMCKAESQILHGNNLTSLLTNERFHRCMLACSAELVLATHKTVTMLFPAVLERTGITAFDLSKVIESFIRHEEPLPRELRRHLNSLEERLLESMVWEKGSSMYNSLTIARPNLSNEINRLGLLADPMPSLDAIALQCNMSCGGLPPVPKRDTSPGKSGEIRSPKRVCNEYRSVLVERNSFTSPVKDRLLGINNLKSKILSPALQSAFASPTRPHPTRGETCGETAVNLFFSKIVKLAAVRINGMVERMQLTQQIRERVYCLFQQILGQRTSLFFNRHIDQIILCCFYGVAKISQLSLTFKEIIFNYRKQPHCKPQVFRAVFVDDRSSSRRSKTGQDHVDIIMFYNEVFIPSVKPLLVELAPSNVPKNPNNQVSDSNKKDESGPCPCPGSPKVSSFPSLPDMSPKKVSAVHNVYVSPLRSTKMDALISHGSKSYYACVGESTHAYQSPSKDLTAINNRLNGTRKVRGSLNFDEVDVGLVSDSLVTQSLYLQNGQNGKGPSSSSGQELKTE.

The tract at residues 375–394 is disordered; the sequence is KRKVDSMTSPTKTITSPLSP. Over residues 380 to 392 the composition is skewed to polar residues; that stretch reads SMTSPTKTITSPL. The domain A stretch occupies residues 404–605; it reads TPVSTAMTTA…EKGSSMYNSL (202 aa). Residues 404–853 are pocket; sequence TPVSTAMTTA…NEVFIPSVKP (450 aa). The tract at residues 606–722 is spacer; that stretch reads TIARPNLSNE…HPTRGETCGE (117 aa). The interval 723-853 is domain B; it reads TAVNLFFSKI…NEVFIPSVKP (131 aa). 2 disordered regions span residues 865-899 and 988-1008; these read KNPN…SLPD and LQNG…LKTE.

This sequence belongs to the retinoblastoma protein (RB) family.

The protein resides in the nucleus. Regulator of biological processes that recruits a histone deacetylase to control gene transcription. May play a role in the entry into mitosis, negatively regulating the cell proliferation. Formation of stable complexes with geminiviridae replication-associated proteins may create a cellular environment which favors viral DNA replication. The polypeptide is Retinoblastoma-related protein (RBR) (Pilosella officinarum (Mouse-ear hawkweed)).